Here is a 186-residue protein sequence, read N- to C-terminus: MPIKSDRWIRRMALEHGMIEPFVDHQVRRGVISYGLTSYGYDMRVTDHFKVFTNVYNALVDPKQFDPRSFVDIRADYVDIPPNSFALAQSLEYFRIPRTVSCIVIGKSSYARCGIIINVTPLEPEWEGHVTIEISNTTPLPARIYAHEGIGQVLFLESDEPCEVSYADKKGKYQGQTGIVLPRIDP.

Lys107–Arg112 lines the dCTP pocket. The active-site Proton donor/acceptor is Glu133. Positions 152, 166, and 176 each coordinate dCTP.

The protein belongs to the dCTP deaminase family. In terms of assembly, homotrimer.

It catalyses the reaction dCTP + H2O + H(+) = dUTP + NH4(+). It functions in the pathway pyrimidine metabolism; dUMP biosynthesis; dUMP from dCTP (dUTP route): step 1/2. Functionally, catalyzes the deamination of dCTP to dUTP. The sequence is that of dCTP deaminase from Chloroflexus aurantiacus (strain ATCC 29366 / DSM 635 / J-10-fl).